We begin with the raw amino-acid sequence, 148 residues long: Putative pre-16S rRNA nuclease (148 aa).

It belongs to the YqgF nuclease family.

The protein localises to the cytoplasm. Could be a nuclease involved in processing of the 5'-end of pre-16S rRNA. This Chlamydia trachomatis serovar L2 (strain ATCC VR-902B / DSM 19102 / 434/Bu) protein is Putative pre-16S rRNA nuclease.